Reading from the N-terminus, the 571-residue chain is Urease subunit alpha (571 aa).

Residues H138, H140, and K221 each contribute to the Ni(2+) site. K221 is subject to N6-carboxylysine. A substrate-binding site is contributed by H223. Ni(2+) is bound by residues H250 and H276. H324 acts as the Proton donor in catalysis. A Ni(2+)-binding site is contributed by D364.

This sequence belongs to the metallo-dependent hydrolases superfamily. Urease alpha subunit family. In terms of assembly, heterotrimer of UreA (gamma), UreB (beta) and UreC (alpha) subunits. Three heterotrimers associate to form the active enzyme. Ni cation serves as cofactor. Post-translationally, carboxylation allows a single lysine to coordinate two nickel ions.

It localises to the cytoplasm. It catalyses the reaction urea + 2 H2O + H(+) = hydrogencarbonate + 2 NH4(+). The protein operates within nitrogen metabolism; urea degradation; CO(2) and NH(3) from urea (urease route): step 1/1. The sequence is that of Urease subunit alpha from Staphylococcus aureus (strain JH9).